Here is a 564-residue protein sequence, read N- to C-terminus: Rhotekin (564 aa).

Residue Arg-14 is modified to Omega-N-methylarginine. Positions 17 to 98 constitute an REM-1 domain; it reads ALEMEFKRGR…LQRRKEAQVL (82 aa). Phosphoserine is present on residues Ser-30 and Ser-106. Arg-230 is subject to Asymmetric dimethylarginine. Ser-232 is modified (phosphoserine). The region spanning 309–416 is the PH domain; that stretch reads QPTASGALRV…WMEALWQLFF (108 aa). The segment at 518-564 is disordered; it reads TFSLDAAPADHSLGPSRSVAPLPPQRSPKSRGFYSKSQLGPWLQSPV. Phosphoserine is present on residues Ser-520, Ser-529, and Ser-544.

In terms of assembly, interacts via its C-terminal region with the TAX1BP3 PDZ domain. This interaction facilitates Rho-mediated activation of the c-Fos serum response element (SRE). Interacts with SEPT9. Specifically binds to GTP-bound RHOA, RHOB and RHOC and inhibits their GTPase activity. Abundantly expressed in brain and kidney. Weakly expressed in lung, testis, skeletal muscle, heart and thymus.

Its function is as follows. Mediates Rho signaling to activate NF-kappa-B and may confer increased resistance to apoptosis to cells in gastric tumorigenesis. May play a novel role in the organization of septin structures. This chain is Rhotekin, found in Mus musculus (Mouse).